We begin with the raw amino-acid sequence, 312 residues long: Acyl-CoA C20 Delta5-desaturase (312 aa).

2 helical membrane passes run 45-65 (VFHI…PSTF) and 69-89 (SFWV…TLSF). Fe cation contacts are provided by histidine 90, histidine 95, histidine 127, histidine 130, and histidine 131. A Histidine box-1 motif is present at residues 90 to 95 (HRNLTH). The Histidine box-2 motif lies at 127–131 (HRYHH). A helical membrane pass occupies residues 193 to 213 (LQAALLYLFGGFPFIVWGMAV). Residues histidine 230, histidine 259, histidine 262, and histidine 263 each contribute to the Fe cation site. The Histidine box-3 signature appears at 259-263 (HNNHH).

The protein belongs to the fatty acid desaturase type 1 family. The cofactor is Fe(2+).

The protein localises to the membrane. The catalysed reaction is (11Z,14Z)-eicosadienoyl-CoA + AH2 + O2 = (5Z,11Z,14Z)-eicosatrienoyl-CoA + A + 2 H2O. It catalyses the reaction (11Z,14Z,17Z)-eicosatrienoyl-CoA + AH2 + O2 = (5Z,11Z,14Z,17Z)-eicosatetraenoyl-CoA + A + 2 H2O. Its pathway is lipid metabolism; polyunsaturated fatty acid biosynthesis. Functionally, catalyzes the desaturation of 20:2Delta(11,14) and 20:3Delta(11,14,17) to generate sciadonic acid (20:3Delta(5,11,14)) and juniperonic acid (20:4Delta(5,11,14,17)). In Anemone leveillei (Windflower), this protein is Acyl-CoA C20 Delta5-desaturase.